The sequence spans 342 residues: Probable endoglucanase (342 aa).

The first 20 residues, 1-20 (MSVMAAMGGAQVLSSTGAFA), serve as a signal peptide directing secretion. Catalysis depends on Glu57, which acts as the Proton donor. Asp114 serves as the catalytic Nucleophile.

It belongs to the glycosyl hydrolase 8 (cellulase D) family.

It localises to the secreted. The catalysed reaction is Endohydrolysis of (1-&gt;4)-beta-D-glucosidic linkages in cellulose, lichenin and cereal beta-D-glucans.. Its function is as follows. Enzyme capable of hydrolyzing carboxy-methyl-cellulose (CMC). The chain is Probable endoglucanase (cmcAX) from Novacetimonas hansenii (Komagataeibacter hansenii).